The following is a 543-amino-acid chain: T-complex protein 1 subunit eta (543 aa).

Residue methionine 1 is modified to N-acetylmethionine. Glycine 41 lines the ADP pocket. Residue glycine 41 coordinates ATP. Lysine 67 bears the N6-acetyllysine mark. Position 92 (aspartate 92) interacts with Mg(2+). ADP contacts are provided by glycine 93, threonine 94, threonine 95, serine 96, serine 164, and serine 165. Glycine 93 contacts ATP. Serine 96 is a binding site for ATP. Lysine 250 and lysine 320 each carry N6-acetyllysine. Residues arginine 398 and glycine 409 each contribute to the ATP site. Glycine 409 serves as a coordination point for ADP. Residue lysine 430 forms a Glycyl lysine isopeptide (Lys-Gly) (interchain with G-Cter in SUMO2) linkage. ADP is bound by residues glutamate 494 and arginine 499. Arginine 499 is an ATP binding site. Residues 524 to 543 (RSTVDASPAAGRGRGRGRLH) form a disordered region. Residue arginine 535 is modified to Omega-N-methylarginine.

The protein belongs to the TCP-1 chaperonin family. In terms of assembly, component of the chaperonin-containing T-complex (TRiC), a hexadecamer composed of two identical back-to-back stacked rings enclosing a protein folding chamber. Each ring is made up of eight different subunits: TCP1/CCT1, CCT2, CCT3, CCT4, CCT5, CCT6A/CCT6, CCT7, CCT8. Interacts with PACRG. Interacts with DLEC1.

Its subcellular location is the cytoplasm. The catalysed reaction is ATP + H2O = ADP + phosphate + H(+). Functionally, component of the chaperonin-containing T-complex (TRiC), a molecular chaperone complex that assists the folding of actin, tubulin and other proteins upon ATP hydrolysis. The TRiC complex mediates the folding of WRAP53/TCAB1, thereby regulating telomere maintenance. This Bos taurus (Bovine) protein is T-complex protein 1 subunit eta (CCT7).